Consider the following 153-residue polypeptide: Small heat shock protein HspB (153 aa).

In terms of domain architecture, sHSP spans 30 to 140; it reads AGTEDNYPPC…KPRRISISGS (111 aa).

Belongs to the small heat shock protein (HSP20) family.

The chain is Small heat shock protein HspB (hspB) from Bradyrhizobium diazoefficiens (strain JCM 10833 / BCRC 13528 / IAM 13628 / NBRC 14792 / USDA 110).